Reading from the N-terminus, the 229-residue chain is N-(5'-phosphoribosyl)anthranilate isomerase (229 aa).

It belongs to the TrpF family.

It catalyses the reaction N-(5-phospho-beta-D-ribosyl)anthranilate = 1-(2-carboxyphenylamino)-1-deoxy-D-ribulose 5-phosphate. It participates in amino-acid biosynthesis; L-tryptophan biosynthesis; L-tryptophan from chorismate: step 3/5. The chain is N-(5'-phosphoribosyl)anthranilate isomerase from Clostridium beijerinckii (strain ATCC 51743 / NCIMB 8052) (Clostridium acetobutylicum).